We begin with the raw amino-acid sequence, 28 residues long: C-hordein (28 aa).

The tract at residues 1-28 (RQLNPSSQELQSPQQSYLQQPYPQNPYL) is disordered.

In terms of tissue distribution, developing endosperm.

Functionally, sulfur-poor seed storage protein. The chain is C-hordein from Hordeum vulgare subsp. spontaneum (Wild barley).